The sequence spans 360 residues: NADH-quinone oxidoreductase subunit H (360 aa).

A run of 8 helical transmembrane segments spans residues 20–40 (GMVWPVLWILLKIVALLIPLM), 95–115 (GLFVLGPVMAIMPALAAWVVI), 130–150 (LLLVMAITSIEVYGVIIAGWA), 176–196 (FCLLIVIMVSGSMNLTEIVLA), 206–226 (GIGFLSWNWLPLLPVFLVYLI), 261–281 (IFFLAEYASMWLVSILAALMF), 297–317 (IPGWIWLGIKTCLVVSMFIWI), and 336–356 (IFIPVTLACLLIAGGWLLSPW).

This sequence belongs to the complex I subunit 1 family. As to quaternary structure, NDH-1 is composed of 14 different subunits. Subunits NuoA, H, J, K, L, M, N constitute the membrane sector of the complex.

Its subcellular location is the cell inner membrane. It carries out the reaction a quinone + NADH + 5 H(+)(in) = a quinol + NAD(+) + 4 H(+)(out). In terms of biological role, NDH-1 shuttles electrons from NADH, via FMN and iron-sulfur (Fe-S) centers, to quinones in the respiratory chain. The immediate electron acceptor for the enzyme in this species is believed to be ubiquinone. Couples the redox reaction to proton translocation (for every two electrons transferred, four hydrogen ions are translocated across the cytoplasmic membrane), and thus conserves the redox energy in a proton gradient. This subunit may bind ubiquinone. This chain is NADH-quinone oxidoreductase subunit H, found in Verminephrobacter eiseniae (strain EF01-2).